Here is a 275-residue protein sequence, read N- to C-terminus: Lacto-N-neotetraose biosynthesis glycosyltransferase LgtB (275 aa).

It belongs to the glycosyltransferase 25 family.

Its pathway is glycan metabolism; lacto-N-neotetraose biosynthesis. It functions in the pathway bacterial outer membrane biogenesis; lipooligosaccharide biosynthesis. Adds the second galactose to the lacto-N-tetraose chain in lipooligosaccharide (LOS). This chain is Lacto-N-neotetraose biosynthesis glycosyltransferase LgtB (lgtB), found in Neisseria meningitidis serogroup B (strain ATCC BAA-335 / MC58).